We begin with the raw amino-acid sequence, 250 residues long: Ribosome-inactivating protein luffin-B (250 aa).

Glu-160 is a catalytic residue.

The protein belongs to the ribosome-inactivating protein family. Type 1 RIP subfamily.

The enzyme catalyses Endohydrolysis of the N-glycosidic bond at one specific adenosine on the 28S rRNA.. This is Ribosome-inactivating protein luffin-B from Luffa aegyptiaca (Sponge gourd).